A 471-amino-acid chain; its full sequence is NALCN channel auxiliary factor 2 (471 aa).

Residues 47–67 (LASLLFFTVLLADHLWLCAGA) form a helical membrane-spanning segment. The segment at 76 to 115 (SAMRPPWGAGRERQPVPPRAVLPPPPPSPGEPSASSGTCG) is disordered. Residues 90–105 (PVPPRAVLPPPPPSPG) show a composition bias toward pro residues. N-linked (GlcNAc...) asparagine glycosylation occurs at Asn-120. 2 disordered regions span residues 158–178 (EPTT…APEF) and 399–424 (HYHP…GGSR). Over residues 161–171 (TPAPPLRPPDS) the composition is skewed to pro residues. The chain crosses the membrane as a helical span at residues 432–452 (LCVLVLILLHTVVSFSSSQSG).

The protein belongs to the NALF family.

The protein localises to the membrane. Probable component of the NALCN channel complex, a channel that regulates the resting membrane potential and controls neuronal excitability. The sequence is that of NALCN channel auxiliary factor 2 (Nalf2) from Mus musculus (Mouse).